The primary structure comprises 249 residues: tRNA pseudouridine synthase A (249 aa).

Catalysis depends on aspartate 53, which acts as the Nucleophile. A substrate-binding site is contributed by tyrosine 111.

Belongs to the tRNA pseudouridine synthase TruA family. As to quaternary structure, homodimer.

It carries out the reaction uridine(38/39/40) in tRNA = pseudouridine(38/39/40) in tRNA. Functionally, formation of pseudouridine at positions 38, 39 and 40 in the anticodon stem and loop of transfer RNAs. This is tRNA pseudouridine synthase A from Streptococcus pneumoniae serotype 19F (strain G54).